The primary structure comprises 68 residues: Antimicrobial peptide Eval418 (68 aa).

Residues M1–A23 form the signal peptide. I36 bears the Isoleucine amide mark. Positions G37–R68 are excised as a propeptide.

The protein belongs to the non-disulfide-bridged peptide (NDBP) superfamily. Short antimicrobial peptide (group 4) family. In terms of tissue distribution, expressed by the venom gland.

It localises to the secreted. Its function is as follows. Probable antimicrobial peptide. Shows dose-dependent and time-dependent inactivation of herpes simplex virus type 1 (HSV-1) and dose-dependent inhibition of HSV-1 viral attachment to host cells. Scarcely suppress an established HSV-1 infection due to poor cellular uptake. The chain is Antimicrobial peptide Eval418 from Euscorpiops validus (Scorpion).